Consider the following 316-residue polypeptide: Sorting nexin-20 (316 aa).

The interval 1-57 (MASHKHPGSPGWTGPICQDMAGTTPKASAPRPDLPRPGPEDHLEAQGSPSSNSSMTT) is disordered. At serine 3 the chain carries Phosphoserine. Positions 47–57 (GSPSSNSSMTT) are enriched in polar residues. The region spanning 74-191 (VKLLFEIASA…DFLTRPELKE (118 aa)) is the PX domain. A 1,2-diacyl-sn-glycero-3-phospho-(1D-myo-inositol-3-phosphate)-binding residues include arginine 116, serine 118, lysine 143, and arginine 157.

This sequence belongs to the sorting nexin family. As to quaternary structure, interacts with SELPLG. Interaction with SELPLG is controversial.

The protein resides in the early endosome membrane. It localises to the cell membrane. Its subcellular location is the cytoplasm. It is found in the nucleus. Functionally, may play a role in cellular vesicle trafficking. Has been proposed to function as a sorting protein that targets SELPLG into endosomes, but has no effect on SELPLG internalization from the cell surface, or on SELPLG-mediated cell-cell adhesion. The polypeptide is Sorting nexin-20 (SNX20) (Bos taurus (Bovine)).